A 458-amino-acid polypeptide reads, in one-letter code: UDP-N-acetylmuramate--L-alanine ligase (458 aa).

An ATP-binding site is contributed by 118–124; that stretch reads GTHGKTT.

Belongs to the MurCDEF family.

It is found in the cytoplasm. It catalyses the reaction UDP-N-acetyl-alpha-D-muramate + L-alanine + ATP = UDP-N-acetyl-alpha-D-muramoyl-L-alanine + ADP + phosphate + H(+). Its pathway is cell wall biogenesis; peptidoglycan biosynthesis. Its function is as follows. Cell wall formation. This chain is UDP-N-acetylmuramate--L-alanine ligase, found in Clostridium acetobutylicum (strain ATCC 824 / DSM 792 / JCM 1419 / IAM 19013 / LMG 5710 / NBRC 13948 / NRRL B-527 / VKM B-1787 / 2291 / W).